The primary structure comprises 251 residues: Triosephosphate isomerase (251 aa).

Position 9 to 11 (9 to 11 (NWK)) interacts with substrate. His93 functions as the Electrophile in the catalytic mechanism. The active-site Proton acceptor is the Glu163. Residues Gly169, Ser209, and 230-231 (GG) each bind substrate.

Belongs to the triosephosphate isomerase family. In terms of assembly, homodimer.

The protein localises to the cytoplasm. The catalysed reaction is D-glyceraldehyde 3-phosphate = dihydroxyacetone phosphate. It participates in carbohydrate biosynthesis; gluconeogenesis. Its pathway is carbohydrate degradation; glycolysis; D-glyceraldehyde 3-phosphate from glycerone phosphate: step 1/1. Involved in the gluconeogenesis. Catalyzes stereospecifically the conversion of dihydroxyacetone phosphate (DHAP) to D-glyceraldehyde-3-phosphate (G3P). This Ruegeria pomeroyi (strain ATCC 700808 / DSM 15171 / DSS-3) (Silicibacter pomeroyi) protein is Triosephosphate isomerase.